The chain runs to 419 residues: Tyrosine--tRNA ligase 1 (419 aa).

An L-tyrosine-binding site is contributed by tyrosine 35. A 'HIGH' region motif is present at residues 40 to 49 (PTAGSLHIGH). Residues tyrosine 172 and glutamine 176 each coordinate L-tyrosine. The 'KMSKS' region motif lies at 232 to 236 (KFGKT). Lysine 235 contacts ATP. Residues 353 to 418 (QDLVELLIES…KKHFCLVKRA (66 aa)) enclose the S4 RNA-binding domain.

It belongs to the class-I aminoacyl-tRNA synthetase family. TyrS type 1 subfamily. As to quaternary structure, homodimer.

It localises to the cytoplasm. The catalysed reaction is tRNA(Tyr) + L-tyrosine + ATP = L-tyrosyl-tRNA(Tyr) + AMP + diphosphate + H(+). In terms of biological role, catalyzes the attachment of tyrosine to tRNA(Tyr) in a two-step reaction: tyrosine is first activated by ATP to form Tyr-AMP and then transferred to the acceptor end of tRNA(Tyr). In Vibrio parahaemolyticus serotype O3:K6 (strain RIMD 2210633), this protein is Tyrosine--tRNA ligase 1.